A 162-amino-acid chain; its full sequence is Interleukin-15 (162 aa).

An N-terminal signal peptide occupies residues 1–29 (MRILKPYLRSTSIQCYLCLLLNSHFLTEA). Residues 30 to 48 (CIPVFILSCINAGLPKTEA) constitute a propeptide that is removed on maturation. Cystine bridges form between cysteine 83/cysteine 133 and cysteine 90/cysteine 136. N-linked (GlcNAc...) asparagine glycans are attached at residues asparagine 104 and asparagine 127.

It belongs to the IL-15/IL-21 family.

The protein resides in the secreted. Functionally, cytokine that plays a major role in the development of inflammatory and protective immune responses to microbial invaders and parasites by modulating immune cells of both the innate and adaptive immune systems. Stimulates the proliferation of natural killer cells, T-cells and B-cells and promotes the secretion of several cytokines. In monocytes, induces the production of IL8 and monocyte chemotactic protein 1/CCL2, two chemokines that attract neutrophils and monocytes respectively to sites of infection. Unlike most cytokines, which are secreted in soluble form, IL15 is expressed in association with its high affinity IL15RA on the surface of IL15-producing cells and delivers signals to target cells that express IL2RB and IL2RG receptor subunits. Binding to its receptor triggers the phosphorylation of JAK1 and JAK3 and the recruitment and subsequent phosphorylation of signal transducer and activator of transcription-3/STAT3 and STAT5. In mast cells, induces the rapid tyrosine phosphorylation of STAT6 and thereby controls mast cell survival and release of cytokines such as IL4. In Felis catus (Cat), this protein is Interleukin-15 (IL15).